We begin with the raw amino-acid sequence, 579 residues long: Potassium-transporting ATPase potassium-binding subunit (579 aa).

The next 10 helical transmembrane spans lie at 2–22, 66–86, 135–155, 177–197, 260–280, 292–312, 391–411, 437–457, 490–510, and 546–566; these read MNLV…AIPL, SFSV…LHIF, GLTV…FALI, VLYI…SQGV, TILS…ALCF, GIAI…IVGV, VFGG…LAVF, VLVC…ASIL, FAGF…SMIF, and FIGL…FPAL.

Belongs to the KdpA family. As to quaternary structure, the system is composed of three essential subunits: KdpA, KdpB and KdpC.

It localises to the cell membrane. Part of the high-affinity ATP-driven potassium transport (or Kdp) system, which catalyzes the hydrolysis of ATP coupled with the electrogenic transport of potassium into the cytoplasm. This subunit binds the extracellular potassium ions and delivers the ions to the membrane domain of KdpB through an intramembrane tunnel. In Clostridium botulinum (strain Eklund 17B / Type B), this protein is Potassium-transporting ATPase potassium-binding subunit.